Here is a 1139-residue protein sequence, read N- to C-terminus: MQTPEVPAERSPRRRSISGTSTSEKPNSMDTANTSPFKVPGFFSKRLKGSIKRTKSQSKLDRNTSFRLPSLRSTDDRSRGLPKLKESRSHESLLSPCSTVECLDLGRGEPVSVKPLHSSILGQDFCFEVTYLSGSKCFSCNSASERDKWMENLRRTVQPNKDNCRRAENVLRLWIIEAKDLAPKKKYFCELCLDDTLFARTTSKTKADNIFWGEHFEFFSLPPLHSITVHIYKDVEKKKKKDKNNYVGLVNIPTASVTGRQFVEKWYPVSTPTPNKGKTGGPSIRIKSRFQTITILPMEQYKEFAEFVTSNYTMLCSVLEPVISVRNKEELACALVHILQSTGRAKDFLTDLVMSEVDRCGEHDVLIFRENTIATKSIEEYLKLVGQQYLHDALGEFIKALYESDENCEVDPSKCSSSELIDHQSNLKMCCELAFCKIINSYCVFPRELKEVFASWKQQCLNRGKQDISERLISASLFLRFLCPAIMSPSLFNLMQEYPDDRTSRTLTLIAKVIQNLANFAKFGNKEEYMAFMNDFLEHEWGGMKRFLLEISNPDTISNTPGFDGYIDLGRELSVLHSLLWEVVSQLDKGENSFLQATVAKLGPLPRVLADITKSLTNPTPIQQQLRRFTEHNSSPNVSGSLSSGLQKIFEDPTDSDLHKLKSPSQDNTDSYFRGKTLLLVQQASSQSMTYSEKDERESSLPNGRSVSLMDLQDTHAAQVEHASVMLDVPIRLTGSQLSITQVASIKQLRETQSTPQSAPQVRRPLHPALNQPGGLQPLSFQNPVYHLNNPIPAMPKASIDSSLENLSTASSRSQSNSEDFKLSGPSNSSMEDFTKRSTQSEDFSRRHTVPDRHIPLALPRQNSTGQAQIRKVDQGGLGARAKAPPSLPHSASLRSTGSMSVVSAALVAEPVQNGSRSRQQSSSSRESPVPKVRAIQRQQTQQVQSPVDSATMSPVERTAAWVLNNGQYEEDVEETEQNLDEAKHAEKYEQEITKLKERLRVSSRRLEEYERRLLVQEQQMQKLLLEYKARLEDSEERLRRQQEEKDSQMKSIISRLMAVEEELKKDHAEMQAVIDAKQKIIDAQEKRIVSLDSANTRLMSALTQVKERYSMQVRNGISPTNPTKLSITENGEFKNSSC.

The tract at residues 1 to 87 is disordered; sequence MQTPEVPAER…SRGLPKLKES (87 aa). Residue Ser-16 is modified to Phosphoserine. Over residues 17–36 the composition is skewed to polar residues; that stretch reads ISGTSTSEKPNSMDTANTSP. The 118-residue stretch at 41 to 158 folds into the PH domain; sequence GFFSKRLKGS…WMENLRRTVQ (118 aa). Residues 45-56 are compositionally biased toward basic residues; the sequence is KRLKGSIKRTKS. Over residues 73 to 87 the composition is skewed to basic and acidic residues; sequence STDDRSRGLPKLKES. Ser-89 carries the phosphoserine modification. Residues 149-267 enclose the C2 domain; sequence WMENLRRTVQ…TGRQFVEKWY (119 aa). One can recognise a Ras-GAP domain in the interval 343 to 551; sequence GRAKDFLTDL…GGMKRFLLEI (209 aa). The residue at position 620 (Thr-620) is a Phosphothreonine. Ser-663 bears the Phosphoserine mark. 5 disordered regions span residues 684–704, 751–782, 803–869, 910–953, and 1116–1139; these read ASSQ…LPNG, ETQS…LSFQ, SLEN…GQAQ, EPVQ…SATM, and NGIS…NSSC. Composition is skewed to polar residues over residues 751 to 760 and 803 to 818; these read ETQSTPQSAP and SLEN…QSNS. Residues 833-855 are compositionally biased toward basic and acidic residues; that stretch reads DFTKRSTQSEDFSRRHTVPDRHI. Residue Ser-864 is modified to Phosphoserine. Over residues 916-928 the composition is skewed to low complexity; the sequence is SRSRQQSSSSRES.

Interacts with PEAK1.

Inhibitory regulator of the Ras-cyclic AMP pathway. In Homo sapiens (Human), this protein is Ras GTPase-activating protein nGAP (RASAL2).